Consider the following 898-residue polypeptide: Cip1-interacting zinc finger protein (898 aa).

Disordered regions lie at residues Q48–L69, Q157–A305, and V318–V471. Residues N170–M203 are compositionally biased toward polar residues. A Phosphoserine modification is found at S209. T244 is modified (phosphothreonine). Positions R263 to P273 are enriched in basic and acidic residues. Residue K280 forms a Glycyl lysine isopeptide (Lys-Gly) (interchain with G-Cter in SUMO2) linkage. Residues V318–Q327 show a composition bias toward low complexity. Residues P328–P351 show a composition bias toward polar residues. Residue K340 forms a Glycyl lysine isopeptide (Lys-Gly) (interchain with G-Cter in SUMO2) linkage. S350 bears the Phosphoserine mark. A compositionally biased stretch (low complexity) spans V355–A383. A compositionally biased stretch (polar residues) spans H384–Q395. A Glycyl lysine isopeptide (Lys-Gly) (interchain with G-Cter in SUMO2) cross-link involves residue K401. A compositionally biased stretch (low complexity) spans Q402–V435. Over residues H436–P445 the composition is skewed to polar residues. S547 is subject to Phosphoserine. K549 participates in a covalent cross-link: Glycyl lysine isopeptide (Lys-Gly) (interchain with G-Cter in SUMO2). Residues S562–S584 form a disordered region. T567 is subject to Phosphothreonine. Low complexity predominate over residues P572–S584. Glycyl lysine isopeptide (Lys-Gly) (interchain with G-Cter in SUMO2) cross-links involve residues K588, K680, and K705. A Matrin-type zinc finger spans residues Y799–K830. A Phosphoserine modification is found at S821. Residue K830 forms a Glycyl lysine isopeptide (Lys-Gly) (interchain with G-Cter in SUMO2) linkage. Phosphoserine is present on S838. A compositionally biased stretch (polar residues) spans L859–K879. The segment at L859 to T898 is disordered. Residue K879 forms a Glycyl lysine isopeptide (Lys-Gly) (interchain with G-Cter in SUMO2) linkage.

As to quaternary structure, interacts with CIP/WAF1.

Its subcellular location is the nucleus. Its function is as follows. May regulate the subcellular localization of CIP/WAF1. The polypeptide is Cip1-interacting zinc finger protein (CIZ1) (Homo sapiens (Human)).